The following is a 750-amino-acid chain: Photosystem I P700 chlorophyll a apoprotein A1 (750 aa).

The next 8 membrane-spanning stretches (helical) occupy residues 70–93, 156–179, 195–219, 291–309, 346–369, 385–411, 433–455, and 531–549; these read VFSA…FHGA, LYCT…FHYH, LNHH…HVSL, TAHH…GHMY, WHAQ…HHMY, LSLF…IFMV, AIIS…LYIH, and FLVH…LILL. [4Fe-4S] cluster contacts are provided by Cys573 and Cys582. The next 2 helical transmembrane spans lie at 589-610 and 664-686; these read HVFL…HFSW and LSAY…MFLF. His675 is a chlorophyll a' binding site. Chlorophyll a is bound by residues Met683 and Tyr691. A phylloquinone-binding site is contributed by Trp692. Residues 724–744 traverse the membrane as a helical segment; sequence AVGVTHYLLGGIATTWAFFLA.

Belongs to the PsaA/PsaB family. The PsaA/B heterodimer binds the P700 chlorophyll special pair and subsequent electron acceptors. PSI consists of a core antenna complex that captures photons, and an electron transfer chain that converts photonic excitation into a charge separation. The eukaryotic PSI reaction center is composed of at least 11 subunits. The cofactor is P700 is a chlorophyll a/chlorophyll a' dimer, A0 is one or more chlorophyll a, A1 is one or both phylloquinones and FX is a shared 4Fe-4S iron-sulfur center..

It is found in the plastid. The protein resides in the chloroplast thylakoid membrane. The catalysed reaction is reduced [plastocyanin] + hnu + oxidized [2Fe-2S]-[ferredoxin] = oxidized [plastocyanin] + reduced [2Fe-2S]-[ferredoxin]. In terms of biological role, psaA and PsaB bind P700, the primary electron donor of photosystem I (PSI), as well as the electron acceptors A0, A1 and FX. PSI is a plastocyanin-ferredoxin oxidoreductase, converting photonic excitation into a charge separation, which transfers an electron from the donor P700 chlorophyll pair to the spectroscopically characterized acceptors A0, A1, FX, FA and FB in turn. Oxidized P700 is reduced on the lumenal side of the thylakoid membrane by plastocyanin. The chain is Photosystem I P700 chlorophyll a apoprotein A1 from Helianthus annuus (Common sunflower).